The sequence spans 123 residues: Small ribosomal subunit protein uS12 (123 aa).

At Asp89 the chain carries 3-methylthioaspartic acid. Positions 103–123 (DTSGVQDRRQGRSKYGAKRPK) are disordered. Residues 113–123 (GRSKYGAKRPK) show a composition bias toward basic residues.

It belongs to the universal ribosomal protein uS12 family. In terms of assembly, part of the 30S ribosomal subunit. Contacts proteins S8 and S17. May interact with IF1 in the 30S initiation complex.

In terms of biological role, with S4 and S5 plays an important role in translational accuracy. Its function is as follows. Interacts with and stabilizes bases of the 16S rRNA that are involved in tRNA selection in the A site and with the mRNA backbone. Located at the interface of the 30S and 50S subunits, it traverses the body of the 30S subunit contacting proteins on the other side and probably holding the rRNA structure together. The combined cluster of proteins S8, S12 and S17 appears to hold together the shoulder and platform of the 30S subunit. This Nitratidesulfovibrio vulgaris (strain ATCC 29579 / DSM 644 / CCUG 34227 / NCIMB 8303 / VKM B-1760 / Hildenborough) (Desulfovibrio vulgaris) protein is Small ribosomal subunit protein uS12.